Here is a 416-residue protein sequence, read N- to C-terminus: Notoamide biosynthesis cluster protein N' (416 aa).

The N-terminal stretch at 1-16 (MRAALLTLAFTALAAA) is a signal peptide. N119 and N262 each carry an N-linked (GlcNAc...) asparagine glycan.

Functionally, part of the gene cluster that mediates the biosynthesis of notoamide, a fungal indole alkaloid that belongs to a family of natural products containing a characteristic bicyclo[2.2.2]diazaoctane core. The first step of notoamide biosynthesis involves coupling of L-proline and L-tryptophan by the bimodular NRPS notE', to produce cyclo-L-tryptophan-L-proline called brevianamide F. The reverse prenyltransferase notF' then acts as a deoxybrevianamide E synthase and converts brevianamide F to deoxybrevianamide E via reverse prenylation at C-2 of the indole ring leading to the bicyclo[2.2.2]diazaoctane core. Deoxybrevianamide E is further hydroxylated at C-6 of the indole ring, likely catalyzed by the cytochrome P450 monooxygenase notG', to yield 6-hydroxy-deoxybrevianamide E. 6-hydroxy-deoxybrevianamide E is a specific substrate of the prenyltransferase notC' for normal prenylation at C-7 to produce 6-hydroxy-7-prenyl-deoxybrevianamide, also called notoamide S. As the proposed pivotal branching point in notoamide biosynthesis, notoamide S can be diverted to notoamide E through an oxidative pyran ring closure putatively catalyzed by either notH' cytochrome P450 monooxygenase or the notD' FAD-linked oxidoreductase. This step would be followed by an indole 2,3-epoxidation-initiated pinacol-like rearrangement catalyzed by the notB' FAD-dependent monooxygenase leading to the formation of notoamide C and notoamide D. On the other hand notoamide S is converted to notoamide T by notH' (or notD'), a bifunctional oxidase that also functions as the intramolecular Diels-Alderase responsible for generation of (-)-notoamide T. To generate antipodal (+)-notoaminide T, notH (or notD) in Aspergillus strain MF297-2 is expected to catalyze a Diels-Alder reaction leading to the opposite stereochemistry. The remaining oxidoreductase notD' (or notH') likely catalyzes the oxidative pyran ring formation to yield (-)-stephacidin A. The FAD-dependent monooxygenase notI' is highly similar to notB' and is predicted to catalyze a similar conversion from (-)-stephacidin A to (+)-notoamide B via the 2,3-epoxidation of (-)-stephacidin A followed by a pinacol-type rearrangement. Finally, it remains unclear which enzyme could be responsible for the final hydroxylation steps leading to notoamide A and sclerotiamide. The function of notN' in the notoamide biosynthesis has not been determined yet. The protein is Notoamide biosynthesis cluster protein N' of Aspergillus versicolor.